The following is a 214-amino-acid chain: dITP/XTP pyrophosphatase (214 aa).

Residue 13–18 (SHNAGK) coordinates substrate. Mg(2+)-binding residues include D45 and D74. The active-site Proton acceptor is D74. Substrate is bound by residues S75, 163 to 166 (FGYD), K186, and 199 to 200 (HR).

Belongs to the HAM1 NTPase family. Homodimer. Mg(2+) serves as cofactor.

The enzyme catalyses XTP + H2O = XMP + diphosphate + H(+). It catalyses the reaction dITP + H2O = dIMP + diphosphate + H(+). It carries out the reaction ITP + H2O = IMP + diphosphate + H(+). Its function is as follows. Pyrophosphatase that catalyzes the hydrolysis of nucleoside triphosphates to their monophosphate derivatives, with a high preference for the non-canonical purine nucleotides XTP (xanthosine triphosphate), dITP (deoxyinosine triphosphate) and ITP. Seems to function as a house-cleaning enzyme that removes non-canonical purine nucleotides from the nucleotide pool, thus preventing their incorporation into DNA/RNA and avoiding chromosomal lesions. This is dITP/XTP pyrophosphatase from Rhizobium meliloti (strain 1021) (Ensifer meliloti).